Consider the following 157-residue polypeptide: UPF0251 protein CLM_1546 (157 aa).

It belongs to the UPF0251 family.

The chain is UPF0251 protein CLM_1546 from Clostridium botulinum (strain Kyoto / Type A2).